Here is a 237-residue protein sequence, read N- to C-terminus: Ditrans,polycis-undecaprenyl-diphosphate synthase ((2E,6E)-farnesyl-diphosphate specific) (237 aa).

The active site involves Asp-11. Asp-11 provides a ligand contact to Mg(2+). Substrate is bound by residues 12–15 (GNGR), Trp-16, Arg-24, His-28, and 56–58 (SIE). Asn-59 functions as the Proton acceptor in the catalytic mechanism. Residues Arg-62, Arg-179, and 185-187 (RLS) contribute to the substrate site. Glu-198 contacts Mg(2+).

It belongs to the UPP synthase family. In terms of assembly, homodimer. The cofactor is Mg(2+).

It carries out the reaction 8 isopentenyl diphosphate + (2E,6E)-farnesyl diphosphate = di-trans,octa-cis-undecaprenyl diphosphate + 8 diphosphate. Its function is as follows. Catalyzes the sequential condensation of isopentenyl diphosphate (IPP) with (2E,6E)-farnesyl diphosphate (E,E-FPP) to yield (2Z,6Z,10Z,14Z,18Z,22Z,26Z,30Z,34E,38E)-undecaprenyl diphosphate (di-trans,octa-cis-UPP). UPP is the precursor of glycosyl carrier lipid in the biosynthesis of bacterial cell wall polysaccharide components such as peptidoglycan and lipopolysaccharide. The protein is Ditrans,polycis-undecaprenyl-diphosphate synthase ((2E,6E)-farnesyl-diphosphate specific) of Coxiella burnetii (strain RSA 493 / Nine Mile phase I).